The sequence spans 320 residues: Histidine decarboxylase proenzyme (320 aa).

Positions 2-11 (NKNLEANRNR) are excised as a propeptide. Serine 98 carries the post-translational modification Pyruvic acid (Ser). Glutamate 215 functions as the Proton donor in the catalytic mechanism.

The proenzyme is a hexamer of identical pi chains; each pi chain monomer is cleaved to form a small (or beta) chain and a large (or alpha) chain by non-hydrolytic self-catalysis. The cofactor is pyruvate.

The catalysed reaction is L-histidine + H(+) = histamine + CO2. In Clostridium perfringens (strain 13 / Type A), this protein is Histidine decarboxylase proenzyme (hdc).